Here is a 214-residue protein sequence, read N- to C-terminus: Pyridoxine/pyridoxamine 5'-phosphate oxidase (214 aa).

Substrate-binding positions include 9-12 (RKSY) and Lys-67. Residues 62 to 67 (RIVLLK), 77 to 78 (YT), Arg-83, Lys-84, and Gln-106 contribute to the FMN site. Positions 124, 128, and 132 each coordinate substrate. Residues 141 to 142 (QS) and Trp-186 each bind FMN. A substrate-binding site is contributed by 192-194 (RLH). Arg-196 provides a ligand contact to FMN.

This sequence belongs to the pyridoxamine 5'-phosphate oxidase family. Homodimer. FMN serves as cofactor.

It carries out the reaction pyridoxamine 5'-phosphate + O2 + H2O = pyridoxal 5'-phosphate + H2O2 + NH4(+). It catalyses the reaction pyridoxine 5'-phosphate + O2 = pyridoxal 5'-phosphate + H2O2. Its pathway is cofactor metabolism; pyridoxal 5'-phosphate salvage; pyridoxal 5'-phosphate from pyridoxamine 5'-phosphate: step 1/1. It functions in the pathway cofactor metabolism; pyridoxal 5'-phosphate salvage; pyridoxal 5'-phosphate from pyridoxine 5'-phosphate: step 1/1. Catalyzes the oxidation of either pyridoxine 5'-phosphate (PNP) or pyridoxamine 5'-phosphate (PMP) into pyridoxal 5'-phosphate (PLP). The chain is Pyridoxine/pyridoxamine 5'-phosphate oxidase from Leptospira interrogans serogroup Icterohaemorrhagiae serovar copenhageni (strain Fiocruz L1-130).